The following is a 748-amino-acid chain: MFDIKRQEIDWGGKKLTLETGQVARQADGAVIATLGETVVLCAVTAAKTVKEGQDFFPLTVHYQEKYSAAGRIPGGFFKRERGATERETLISRLIDRPIRPLFPEGFYNETLVIAQVMSYDGENEPDILAMIAASAALALSGVPFLGPIGAARVGYQDGEFILNPTLEQLEKSDLDLVVGATRDAVMMVESEANELPEEVMLNAVSFAHESLQPVIKAIINLAEQAAKEPWELVSYDDSALAAKVEELCYDNFDKAYRLTRKAERVDALSKAKAVLDEAFPEADPTEKLRIQKLAKKLEAKIVRTAILKEGRRIDGRDLKTVRPIRSQVGFLPRTHGSALFTRGETQALVSTTLGTADAEQMIDGLTGLHYERFMLHYNFPPYSVGEVGRFGAPGRREIGHGKLAWRALHPVLPSKADFPYTIRVLSDITESNGSSSMATVCGGCLALMDAGVPLTRPVSGIAMGLILEKDGFAILSDIMGDEDHLGDMDFKVAGTEKGITSLQMDIKVAGITEEIMQKALEQAKGGRAHILGEMSKALGEVRSEISNLAPRIETMSVPKDKIRDVIGTGGKVIREIVATTGAKVDIEDDGTVRLSSSDPANIEAAREWINGIVEEPEVGKIYNGKVVNIVDFGAFVNFMGGRDGLVHVSEIKNERVNKVSDVLSEGQEVKVKVLEIDNRGKVRLSMRVVDQETGAELDDNRPPRENAERRGGERPRRDRGPRRESGDRPARRDMEPEFAPAFLRKDS.

Mg(2+)-binding residues include Asp-484 and Asp-490. Positions Pro-551 to Ile-610 constitute a KH domain. Residues Gly-620 to Arg-688 enclose the S1 motif domain. Residues Glu-693–Ser-748 are disordered. Basic and acidic residues predominate over residues Asp-699–Glu-736.

The protein belongs to the polyribonucleotide nucleotidyltransferase family. Mg(2+) is required as a cofactor.

It localises to the cytoplasm. The enzyme catalyses RNA(n+1) + phosphate = RNA(n) + a ribonucleoside 5'-diphosphate. Involved in mRNA degradation. Catalyzes the phosphorolysis of single-stranded polyribonucleotides processively in the 3'- to 5'-direction. This chain is Polyribonucleotide nucleotidyltransferase, found in Zymomonas mobilis subsp. mobilis (strain ATCC 31821 / ZM4 / CP4).